The following is a 485-amino-acid chain: Membrane-bound lytic murein transglycosylase F (485 aa).

A signal peptide spans 1 to 29; sequence MFAHTALRQRCAKWLLATGLFLLLGACVE. The non-LT domain stretch occupies residues 30–267; the sequence is KPSTLERVKE…RLKDRYYGHV (238 aa). Residues 268–485 are LT domain; the sequence is DVLGYVGAYT…DKPADKSSPM (218 aa). Residue glutamate 314 is part of the active site. The disordered stretch occupies residues 465 to 485; sequence EGNLHVPGVNKDKPADKSSPM. Residues 474 to 485 are compositionally biased toward basic and acidic residues; that stretch reads NKDKPADKSSPM.

This sequence in the N-terminal section; belongs to the bacterial solute-binding protein 3 family. It in the C-terminal section; belongs to the transglycosylase Slt family.

It localises to the cell outer membrane. The enzyme catalyses Exolytic cleavage of the (1-&gt;4)-beta-glycosidic linkage between N-acetylmuramic acid (MurNAc) and N-acetylglucosamine (GlcNAc) residues in peptidoglycan, from either the reducing or the non-reducing ends of the peptidoglycan chains, with concomitant formation of a 1,6-anhydrobond in the MurNAc residue.. Its function is as follows. Murein-degrading enzyme that degrades murein glycan strands and insoluble, high-molecular weight murein sacculi, with the concomitant formation of a 1,6-anhydromuramoyl product. Lytic transglycosylases (LTs) play an integral role in the metabolism of the peptidoglycan (PG) sacculus. Their lytic action creates space within the PG sacculus to allow for its expansion as well as for the insertion of various structures such as secretion systems and flagella. The chain is Membrane-bound lytic murein transglycosylase F from Pseudomonas putida (strain ATCC 700007 / DSM 6899 / JCM 31910 / BCRC 17059 / LMG 24140 / F1).